Reading from the N-terminus, the 365-residue chain is Uroporphyrinogen decarboxylase (365 aa).

Substrate is bound by residues 27–31 (RQAGR), Asp-77, Tyr-154, Thr-209, and His-327.

This sequence belongs to the uroporphyrinogen decarboxylase family. As to quaternary structure, homodimer.

The protein localises to the cytoplasm. The enzyme catalyses uroporphyrinogen III + 4 H(+) = coproporphyrinogen III + 4 CO2. It participates in porphyrin-containing compound metabolism; protoporphyrin-IX biosynthesis; coproporphyrinogen-III from 5-aminolevulinate: step 4/4. Catalyzes the decarboxylation of four acetate groups of uroporphyrinogen-III to yield coproporphyrinogen-III. This is Uroporphyrinogen decarboxylase from Nitrosospira multiformis (strain ATCC 25196 / NCIMB 11849 / C 71).